A 140-amino-acid chain; its full sequence is RxLR effector protein Avh23 (140 aa).

Residues methionine 1–alanine 21 form the signal peptide. A RxLR-dEER motif is present at residues arginine 54 to arginine 72. The ADA2-binding IR1 repeat unit spans residues glutamine 100 to aspartate 113. Residues glutamine 114–alanine 127 form an ADA2-binding IR2 repeat.

It belongs to the RxLR effector family. As to quaternary structure, interacts with host histone acetyl transferase SAGA complex subunit ADA2.

It is found in the secreted. The protein localises to the host nucleus. Its subcellular location is the host cytoplasm. Effector that suppresses plant defense responses during the early stages of pathogen infection. Suppresses cell death induced by effectors and PAMPs in plant hosts. Acts as a modulator of histone acetyltransferase (HAT) in plants. Avh23 binds to the ADA2 subunit of the HAT complex SAGA and disrupts its assembly by interfering with the association of ADA2 with the catalytic subunit GCN5. As such, Avh23 suppresses H3K9 acetylation mediated by the ADA2/GCN5 module and increases plant susceptibility. This chain is RxLR effector protein Avh23, found in Phytophthora sojae (Soybean stem and root rot agent).